Reading from the N-terminus, the 345-residue chain is MKVAIIGATGYGGIELIRLLQQHPYFSIVSIHSFSQVGEHITSSYPHLRRFLVYTLQEIDVESIKKEADLVFLATPAGVSVKLTPLLLKAGLKVIDLSGDFRMVNPSIYEMWYKKPAASEEFLQQAVYGLSEWKRDEIQQAKLVANPGCFATATLLAIAPLMRNKIIEENSIIIDAKSGVSGAGKTPTHAAHFPELYDNLHIYKVNEHQHIPEIEQMLIGWNEQAKPITFSTHLIPVSRGIMVTLYAKIRKYVQIEELHNLYTNIYKNAYFVRIRPYGEFPSIKEVRGSNYCDIGIGYDERTKRITVVAVIDNMMKGAAGQAVQNANLVARLDEKTGLQYIPIYP.

The active site involves cysteine 149.

It belongs to the NAGSA dehydrogenase family. Type 1 subfamily.

The protein resides in the cytoplasm. The catalysed reaction is N-acetyl-L-glutamate 5-semialdehyde + phosphate + NADP(+) = N-acetyl-L-glutamyl 5-phosphate + NADPH + H(+). The protein operates within amino-acid biosynthesis; L-arginine biosynthesis; N(2)-acetyl-L-ornithine from L-glutamate: step 3/4. Its function is as follows. Catalyzes the NADPH-dependent reduction of N-acetyl-5-glutamyl phosphate to yield N-acetyl-L-glutamate 5-semialdehyde. This chain is N-acetyl-gamma-glutamyl-phosphate reductase, found in Bacillus cytotoxicus (strain DSM 22905 / CIP 110041 / 391-98 / NVH 391-98).